We begin with the raw amino-acid sequence, 58 residues long: U11-ctenitoxin-Pn1b (58 aa).

Intrachain disulfides connect Cys-2–Cys-16, Cys-9–Cys-22, Cys-15–Cys-40, Cys-24–Cys-38, and Cys-48–Cys-55.

In terms of tissue distribution, expressed by the venom gland.

Its subcellular location is the secreted. In terms of biological role, non-toxic to mice. The sequence is that of U11-ctenitoxin-Pn1b from Phoneutria nigriventer (Brazilian armed spider).